The chain runs to 551 residues: Steroid transmembrane transporter SLC22A24 (551 aa).

Transmembrane regions (helical) follow at residues 16-36 (FQIL…PHTV), 146-166 (SVAK…GGHL), 174-194 (FIVT…AFAP), 204-222 (FLTG…LLIL), 235-255 (ALIF…AFGI), 260-280 (HLQL…RWLS), 350-370 (ICLL…LLIN), 378-398 (VFLL…LGNF), 410-430 (IIFM…TQEM), 435-455 (LVLA…TAVL), 469-489 (LGVI…LMIL), and 496-516 (LPWI…LLLP). The segment at 524–551 (PDSIQDVENKRKSSREVKKDAVAKVTPF) is disordered. A compositionally biased stretch (basic and acidic residues) spans 530–545 (VENKRKSSREVKKDAV).

As to expression, localized to the kidney. Mainly expressed in the late segments of proximal tubules.

It localises to the cell membrane. It carries out the reaction estrone 3-sulfate(out) + glutarate(in) = estrone 3-sulfate(in) + glutarate(out). The enzyme catalyses 17beta-estradiol 17-O-(beta-D-glucuronate)(out) + glutarate(in) = 17beta-estradiol 17-O-(beta-D-glucuronate)(in) + glutarate(out). The catalysed reaction is dehydroepiandrosterone 3-sulfate(out) + glutarate(in) = dehydroepiandrosterone 3-sulfate(in) + glutarate(out). Renal transmembrane organic anion/dicarboxylate exchanger that participates in the reabsorption of conjugated steroids, as well as bile acids, driven by an outward gradient of dicarboxylates such as glutarate or succinate. Transports estrone 3-sulfate and estradiol-17-glucuronide (17beta-estradiol 17-O-(beta-D-glucuronate)), but not androstanediol glucuronide (5alpha-androstane-3alpha,17beta-diol 3-O-(beta-D-glucuronate)), nor taurocholate. Prefers sulfate conjugates of steroids rather than glucuronide conjugates. This Rattus norvegicus (Rat) protein is Steroid transmembrane transporter SLC22A24.